Here is a 363-residue protein sequence, read N- to C-terminus: Thioredoxin domain-containing protein C13F5.05, mitochondrial (363 aa).

A mitochondrion-targeting transit peptide spans 1 to 24 (MLFRIPTLFTLFLACFSLVSGVFG). In terms of domain architecture, Thioredoxin spans 32-141 (NTIELNSKNF…KSLQKFVSDS (110 aa)).

It localises to the mitochondrion. The protein is Thioredoxin domain-containing protein C13F5.05, mitochondrial of Schizosaccharomyces pombe (strain 972 / ATCC 24843) (Fission yeast).